We begin with the raw amino-acid sequence, 253 residues long: MGRKFFVGGNWKCNGTVSQVETIVNTLNAGQIASPDVVEVVVSPPYVFLPTVKDKLRPEIQVAAQNCWVKKGGAFTGEVSAEMLVNLGIPWVILGHSERRSLLAESSEFVGEKVAYALAQGLKVIACVGETLEQREAGSTMEVVAEQTKAIADKIKDWTNVVVAYEPVWAIGTGKVASPAQAQEVHANLRDWLKTNVSPEVAESTRIIYGGSVTGASCKELAAQPDVDGFLVGGASLKPEFIDIINAATVKSA.

Residues Asn-10 and Lys-12 each coordinate substrate. The active-site Electrophile is His-96. The active-site Proton acceptor is the Glu-166.

This sequence belongs to the triosephosphate isomerase family. Homodimer.

It localises to the cytoplasm. The enzyme catalyses D-glyceraldehyde 3-phosphate = dihydroxyacetone phosphate. Its pathway is carbohydrate biosynthesis; gluconeogenesis. The protein operates within carbohydrate degradation; glycolysis; D-glyceraldehyde 3-phosphate from glycerone phosphate: step 1/1. The sequence is that of Triosephosphate isomerase, cytosolic from Secale cereale (Rye).